The chain runs to 372 residues: Alanine racemase (372 aa).

Residue Lys-36 is the Proton acceptor; specific for D-alanine of the active site. Lys-36 carries the post-translational modification N6-(pyridoxal phosphate)lysine. Arg-134 serves as a coordination point for substrate. Tyr-266 serves as the catalytic Proton acceptor; specific for L-alanine. Position 314 (Met-314) interacts with substrate.

It belongs to the alanine racemase family. Pyridoxal 5'-phosphate serves as cofactor.

The enzyme catalyses L-alanine = D-alanine. The protein operates within amino-acid biosynthesis; D-alanine biosynthesis; D-alanine from L-alanine: step 1/1. In terms of biological role, catalyzes the interconversion of L-alanine and D-alanine. May also act on other amino acids. This chain is Alanine racemase (alr), found in Nitratidesulfovibrio vulgaris (strain DSM 19637 / Miyazaki F) (Desulfovibrio vulgaris).